The chain runs to 260 residues: Flagellar basal-body rod protein FlgG (260 aa).

This sequence belongs to the flagella basal body rod proteins family. The basal body constitutes a major portion of the flagellar organelle and consists of four rings (L,P,S, and M) mounted on a central rod. The rod consists of about 26 subunits of FlgG in the distal portion, and FlgB, FlgC and FlgF are thought to build up the proximal portion of the rod with about 6 subunits each.

It is found in the bacterial flagellum basal body. In Escherichia coli O157:H7, this protein is Flagellar basal-body rod protein FlgG (flgG).